The following is a 1271-amino-acid chain: Zinc finger transcription factor Trps1 (1271 aa).

Disordered stretches follow at residues 1–76 and 124–155; these read MVRK…DSAS and SPIK…DMSP. Positions 34-49 are enriched in polar residues; it reads SKEISTDPMQENSEQS. A compositionally biased stretch (basic and acidic residues) spans 54 to 65; that stretch reads HNSDDHSFHDQE. Residues 66-76 are compositionally biased toward polar residues; the sequence is PSSSINKDSAS. The C2H2-type 1; atypical zinc finger occupies 217–242; the sequence is FKCNICGYGYYGNDPTDLIKHFRKYH. The segment at 328–353 adopts a C2H2-type 2; atypical zinc-finger fold; the sequence is FRCKFCNFTYLAKSATELEQHFLKTH. Residues 353–387 are disordered; it reads HPNKMKMSSDSGKPSEKSTNKSSPIPRSCEPGDLG. A C2H2-type 3; atypical zinc finger spans residues 426 to 451; sequence YWCKFCSFSCESSSNSKLLEHHSKQH. The C2H2-type 4; atypical zinc-finger motif lies at 513-543; sequence YNCQFCDFRYSKSHGPEVILVGPLLRHYQQH. 3 C2H2-type zinc fingers span residues 604 to 627, 656 to 679, and 682 to 705; these read HQCD…ENAH, HSCT…RRVH, and YKCR…NSAH. The tract at residues 843 to 877 is disordered; it reads GVTAGASGEKSGQHTPQYPTAGDSKSKDESQSLLR. A GATA-type zinc finger spans residues 886-910; it reads CANCLTTKTSLWRKNANGGYVCNAC. Disordered stretches follow at residues 938-987, 1031-1064, and 1154-1196; these read RTRK…RENQ, SPQE…YMRP, and LDLA…EKSD. Over residues 972 to 985 the composition is skewed to basic and acidic residues; sequence IRSEDHSMEGHQRE. The segment covering 1031–1049 has biased composition (low complexity); it reads SPQESSGEPGNSSSVSDGK. 2 stretches are compositionally biased toward basic and acidic residues: residues 1050–1062 and 1170–1196; these read GSSE…EKYM and DSKE…EKSD. Positions 1153 to 1271 are transcriptional repressor domain; that stretch reads PLDLAMKHSR…QAEKNGKNKD (119 aa). Residues Lys1182 and Lys1191 each participate in a glycyl lysine isopeptide (Lys-Gly) (interchain with G-Cter in SUMO) cross-link. C2H2-type zinc fingers lie at residues 1205 to 1227 and 1233 to 1257; these read TKCV…MSCH and FQCS…RGLH.

Binds specifically to GATA sequences. Post-translationally, sumoylated. Sumoylation in the repressor domain inhibits the transcription repression activity. Sumoylation on Lys-1191 is the major site. Appears to be sumoylated on multiple sites.

Its subcellular location is the nucleus. Transcriptional repressor. Represses expression of GATA-regulated genes at selected sites and stages in vertebrate development. This Xenopus laevis (African clawed frog) protein is Zinc finger transcription factor Trps1 (trps1).